Here is an 82-residue protein sequence, read N- to C-terminus: Turripeptide Gsp9.1 (82 aa).

The first 23 residues, 1 to 23 (MMAKLMITVMMVLLLSLQQGADG), serve as a signal peptide directing secretion. Residues 24–46 (RSKRWRKNQMAASSIMRNLITAR) constitute a propeptide that is removed on maturation. Proline 49 and proline 50 each carry 4-hydroxyproline. 3 disulfides stabilise this stretch: cysteine 53-cysteine 68, cysteine 58-cysteine 72, and cysteine 64-cysteine 79. 2 positions are modified to 4-carboxyglutamate: glutamate 60 and glutamate 63.

The protein belongs to the Pg turripeptide superfamily. Expressed by the venom duct.

Its subcellular location is the secreted. The protein is Turripeptide Gsp9.1 of Gemmula speciosa (Splendid gem-turris).